The chain runs to 280 residues: Bis(5'-nucleosyl)-tetraphosphatase, symmetrical (280 aa).

Belongs to the Ap4A hydrolase family.

The catalysed reaction is P(1),P(4)-bis(5'-adenosyl) tetraphosphate + H2O = 2 ADP + 2 H(+). Its function is as follows. Hydrolyzes diadenosine 5',5'''-P1,P4-tetraphosphate to yield ADP. This chain is Bis(5'-nucleosyl)-tetraphosphatase, symmetrical, found in Shigella boydii serotype 18 (strain CDC 3083-94 / BS512).